The primary structure comprises 142 residues: MKTYSAKPAEVQRDWYLVDATDKTLGRLASEVAHRLRGKHKPVFTPHVDAGDYIVVINADKIRLTGRKERDKQYFWHTGFPGGIKSRSVAEVRERHPERLIESAVRGMMPKNRLGRAMLKKLKVYAGNEHRHHAQQPQPLEL.

It belongs to the universal ribosomal protein uL13 family. In terms of assembly, part of the 50S ribosomal subunit.

Its function is as follows. This protein is one of the early assembly proteins of the 50S ribosomal subunit, although it is not seen to bind rRNA by itself. It is important during the early stages of 50S assembly. This is Large ribosomal subunit protein uL13 from Halorhodospira halophila (strain DSM 244 / SL1) (Ectothiorhodospira halophila (strain DSM 244 / SL1)).